A 373-amino-acid polypeptide reads, in one-letter code: Putative 8-amino-7-oxononanoate synthase (373 aa).

A substrate-binding site is contributed by Arg-18. 93–94 (GF) contacts pyridoxal 5'-phosphate. Residue His-118 coordinates substrate. Pyridoxal 5'-phosphate is bound by residues Ser-166, 191-194 (DEAH), and 220-223 (TLSK). Lys-223 is subject to N6-(pyridoxal phosphate)lysine. Substrate is bound at residue Thr-337.

The protein belongs to the class-II pyridoxal-phosphate-dependent aminotransferase family. BioF subfamily. Homodimer. Pyridoxal 5'-phosphate serves as cofactor.

The enzyme catalyses 6-carboxyhexanoyl-[ACP] + L-alanine + H(+) = (8S)-8-amino-7-oxononanoate + holo-[ACP] + CO2. Its pathway is cofactor biosynthesis; biotin biosynthesis. Its function is as follows. Catalyzes the decarboxylative condensation of pimeloyl-[acyl-carrier protein] and L-alanine to produce 8-amino-7-oxononanoate (AON), [acyl-carrier protein], and carbon dioxide. This is Putative 8-amino-7-oxononanoate synthase (bioF) from Aquifex aeolicus (strain VF5).